We begin with the raw amino-acid sequence, 438 residues long: sn-glycerol-3-phosphate-binding periplasmic protein UgpB (438 aa).

The signal sequence occupies residues 1-23 (MISLRHTALGLALSLAFTGQALA). Residues tyrosine 65, glutamate 89, serine 144, serine 270, glycine 307, tyrosine 346, and arginine 397 each coordinate sn-glycerol 3-phosphate.

The protein belongs to the bacterial solute-binding protein 1 family. In terms of assembly, the complex is composed of two ATP-binding proteins (UgpC), two transmembrane proteins (UgpA and UgpE) and a solute-binding protein (UgpB).

Its subcellular location is the periplasm. In terms of biological role, part of the ABC transporter complex UgpBAEC involved in sn-glycerol-3-phosphate (G3P) import. Binds G3P. This Salmonella typhi protein is sn-glycerol-3-phosphate-binding periplasmic protein UgpB (ugpB).